A 341-amino-acid polypeptide reads, in one-letter code: Anthranilate phosphoribosyltransferase (341 aa).

Residues Gly-84, 87-88, Thr-92, 94-97, 112-120, and Ser-124 each bind 5-phospho-alpha-D-ribose 1-diphosphate; these read GD, NIST, and KHGNRSVSS. Gly-84 lines the anthranilate pocket. Ser-96 provides a ligand contact to Mg(2+). Residue Asn-115 coordinates anthranilate. An anthranilate-binding site is contributed by Arg-170. Mg(2+)-binding residues include Asp-229 and Glu-230.

It belongs to the anthranilate phosphoribosyltransferase family. In terms of assembly, homodimer. Mg(2+) is required as a cofactor.

The catalysed reaction is N-(5-phospho-beta-D-ribosyl)anthranilate + diphosphate = 5-phospho-alpha-D-ribose 1-diphosphate + anthranilate. It functions in the pathway amino-acid biosynthesis; L-tryptophan biosynthesis; L-tryptophan from chorismate: step 2/5. In terms of biological role, catalyzes the transfer of the phosphoribosyl group of 5-phosphorylribose-1-pyrophosphate (PRPP) to anthranilate to yield N-(5'-phosphoribosyl)-anthranilate (PRA). The protein is Anthranilate phosphoribosyltransferase of Polynucleobacter asymbioticus (strain DSM 18221 / CIP 109841 / QLW-P1DMWA-1) (Polynucleobacter necessarius subsp. asymbioticus).